Here is a 385-residue protein sequence, read N- to C-terminus: MKNITILGATGSIGTQTLDVIRREKEELKLVAISANKSYKKVIEIIKEFKPKYTVLMEENAFKIVEDFCIDNKIDTKVLKGMEGMIYISTLEEVNTVVTSVVGMIGLVPTIKAIESGKDIALANKETLVVAGELVISKAKEHNVNILPVDSEHGAIFQCLRGNKKEEVKNIIVTASGGPFRGKKKEELIDVKPEHALKHPKWNMGRKISIDSATLMNKGLEVIEAHFLFGVDYENIKVVVHPQSIVHSMVEYKDGSVIAQMATPDMKLPIQYALNYPNRKESQIEPLDFYKISNLTFEKPDMDTFLPLKLAYEAGKKGGVMPAILNGANEVAVDLFLKGKIEFLQIGDLLQECMNKFYKSMEATLENVISVDKEVREYLGKKYDI.

Positions 10, 11, 12, 13, 37, and 124 each coordinate NADPH. Lysine 125 serves as a coordination point for 1-deoxy-D-xylulose 5-phosphate. An NADPH-binding site is contributed by glutamate 126. Aspartate 150 is a binding site for Mn(2+). 1-deoxy-D-xylulose 5-phosphate contacts are provided by serine 151, glutamate 152, serine 176, and histidine 199. Glutamate 152 contributes to the Mn(2+) binding site. Position 205 (glycine 205) interacts with NADPH. Positions 212, 217, 218, and 221 each coordinate 1-deoxy-D-xylulose 5-phosphate. Residue glutamate 221 participates in Mn(2+) binding.

The protein belongs to the DXR family. The cofactor is Mg(2+). It depends on Mn(2+) as a cofactor.

It carries out the reaction 2-C-methyl-D-erythritol 4-phosphate + NADP(+) = 1-deoxy-D-xylulose 5-phosphate + NADPH + H(+). The protein operates within isoprenoid biosynthesis; isopentenyl diphosphate biosynthesis via DXP pathway; isopentenyl diphosphate from 1-deoxy-D-xylulose 5-phosphate: step 1/6. Catalyzes the NADPH-dependent rearrangement and reduction of 1-deoxy-D-xylulose-5-phosphate (DXP) to 2-C-methyl-D-erythritol 4-phosphate (MEP). The sequence is that of 1-deoxy-D-xylulose 5-phosphate reductoisomerase from Clostridium botulinum (strain Langeland / NCTC 10281 / Type F).